Reading from the N-terminus, the 514-residue chain is Peptide chain release factor 3 (514 aa).

Positions 8 to 268 (KKRRTFAIIS…TFLEFAPEPH (261 aa)) constitute a tr-type G domain. GTP-binding positions include 17-24 (SHPDAGKT), 85-89 (DTPGH), and 139-142 (NKLD).

The protein belongs to the TRAFAC class translation factor GTPase superfamily. Classic translation factor GTPase family. PrfC subfamily.

Its subcellular location is the cytoplasm. Functionally, increases the formation of ribosomal termination complexes and stimulates activities of RF-1 and RF-2. It binds guanine nucleotides and has strong preference for UGA stop codons. It may interact directly with the ribosome. The stimulation of RF-1 and RF-2 is significantly reduced by GTP and GDP, but not by GMP. This is Peptide chain release factor 3 from Streptococcus agalactiae serotype Ia (strain ATCC 27591 / A909 / CDC SS700).